Consider the following 495-residue polypeptide: tRNA-guanine(15) transglycosylase (495 aa).

D83 serves as the catalytic Nucleophile. D118 serves as a coordination point for substrate. Zn(2+) is bound by residues C273 and C278.

Belongs to the archaeosine tRNA-ribosyltransferase family. The cofactor is Zn(2+).

It catalyses the reaction guanosine(15) in tRNA + 7-cyano-7-deazaguanine = 7-cyano-7-carbaguanosine(15) in tRNA + guanine. It participates in tRNA modification; archaeosine-tRNA biosynthesis. Functionally, exchanges the guanine residue with 7-cyano-7-deazaguanine (preQ0) at position 15 in the dihydrouridine loop (D-loop) of archaeal tRNAs. The sequence is that of tRNA-guanine(15) transglycosylase from Pyrobaculum aerophilum (strain ATCC 51768 / DSM 7523 / JCM 9630 / CIP 104966 / NBRC 100827 / IM2).